Here is a 484-residue protein sequence, read N- to C-terminus: Cobyric acid synthase (484 aa).

Positions 248–435 (VLKVIVPVLP…LHGLFEGSQS (188 aa)) constitute a GATase cobBQ-type domain. C329 (nucleophile) is an active-site residue. Residue H427 is part of the active site.

Belongs to the CobB/CobQ family. CobQ subfamily.

The protein operates within cofactor biosynthesis; adenosylcobalamin biosynthesis. Its function is as follows. Catalyzes amidations at positions B, D, E, and G on adenosylcobyrinic A,C-diamide. NH(2) groups are provided by glutamine, and one molecule of ATP is hydrogenolyzed for each amidation. The sequence is that of Cobyric acid synthase from Pseudomonas putida (strain ATCC 700007 / DSM 6899 / JCM 31910 / BCRC 17059 / LMG 24140 / F1).